A 776-amino-acid polypeptide reads, in one-letter code: Angiomotin-like protein 2 (776 aa).

The tract at residues 41 to 88 is disordered; sequence GGAGAGGTGSPQASAEILAPEDTQVLQQATRQEPQGQEHQGGESHLAE. The tract at residues 101–307 is required for interaction with CDH5; it reads GEELPTYEEA…STQTSSAPSG (207 aa). Tyrosine 107 carries the phosphotyrosine modification. 3 disordered regions span residues 119–142, 169–215, and 283–309; these read AQQA…GHRS, RNGA…QYPH, and GPLG…SGSA. Over residues 177–192 the composition is skewed to polar residues; the sequence is HMSSSHSFPQLARNQQ. Residues 196-213 show a composition bias toward pro residues; the sequence is PRGPPAEGPEPRGPPPQY. The required for interaction with CDH1 stretch occupies residues 220 to 307; that stretch reads HETATAVTDP…STQTSSAPSG (88 aa). Polar residues predominate over residues 297–306; that stretch reads ASTQTSSAPS. Coiled-coil stretches lie at residues 314 to 509 and 543 to 570; these read METL…LELR and ALRL…WEQK. Residues lysine 347 and lysine 408 each participate in a glycyl lysine isopeptide (Lys-Gly) (interchain with G-Cter in ubiquitin) cross-link. 2 disordered regions span residues 591–620 and 677–743; these read QRDT…GHRH and TQGW…LDPD. The segment covering 678 to 687 has biased composition (polar residues); sequence QGWQSLSSSE. Residues serine 756 and serine 759 each carry the phosphoserine modification. The short motif at 773–776 is the PDZ-binding element; it reads EILI.

Belongs to the angiomotin family. Part of a complex composed of AMOTL2, MAGI1 and CDH5, within the complex AMOTL2 acts as a scaffold protein for the interaction of MAGI1 with CDH5. The complex is required for coupling actin fibers to cell junctions in endothelial cells. Within the complex AMOTL2 (via its N-terminus) interacts with CDH5. Interacts (via N-terminus) with MAGI1. Interacts (via N-terminus) with ACTB; the interaction facilitates binding of cell junction complexes to actin fibers in endothelial cells. Interacts with CDH1; the interaction may facilitate binding of radial actin fibers to cell junction complexes. Interacts with SRC. Interacts with YAP1; the interaction is required for ubiquitination of AMOTL2 and localization of YAP1 to tight junctions. Interacts with WWP1; the interaction facilitates WWP1 interaction with the Crumbs complex and subsequent WWP1 translocation to the plasma membrane. WPP1 interaction with the Crumbs complex promotes WPP1 monoubiquitination of AMOTL2 which subsequently activates the Hippo signaling pathway. When ubiquitinated interacts with LATS2 (via UBA domain); the interaction promotes LATS2 phosphorylation of YAP1. Interacts (via PPXY motif) with WWTR1/TAZ (via WW domain); the interaction promotes WWTR1/TAZ localization to the cytoplasm and thereby inhibition of its transcriptional properties. Interacts with PHLDB2; interaction may facilitate PHLDB2 localization to the myotube podosome cortex that surrounds the core. Monoubiquitinated at Lys-347 and Lys-408 by Crumbs complex-bound WWP1. De-ubiquitinated at Lys-347 and Lys-408 by USP9X; the interaction may be promoted by cell contact inhibition. Deubiquitination of AMOTL2 negatively regulates Hippo signaling activation. In terms of processing, phosphorylation at Tyr-107 is necessary for efficient binding to SRC and synergistically functioning with SRC to activate the downstream MAPK pathway.

It is found in the recycling endosome. Its subcellular location is the cytoplasm. The protein localises to the cell projection. It localises to the podosome. The protein resides in the cell junction. In terms of biological role, regulates the translocation of phosphorylated SRC to peripheral cell-matrix adhesion sites. Required for proper architecture of actin filaments. Plays a role in coupling actin fibers to cell junctions in endothelial cells and is therefore required for correct endothelial cell morphology via facilitating transcellular transmission of mechanical force resulting in endothelial cell elongation. Required for the anchoring of radial actin fibers to CDH1 junction complexes at the cell membrane which facilitates organization of radial actin fiber structure and cellular response to contractile forces. This contributes to maintenance of cell area, size, shape, epithelial sheet organization and trophectoderm cell properties that facilitate blastocyst zona hatching. Inhibits the Wnt/beta-catenin signaling pathway, probably by recruiting CTNNB1 to recycling endosomes and hence preventing its translocation to the nucleus. Participates in angiogenesis. Activates the Hippo signaling pathway in response to cell contact inhibition via interaction with and ubiquitination by Crumbs complex-bound WWP1. Ubiquitinated AMOTL2 then interacts with LATS2 which in turn phosphorylates YAP1, excluding it from the nucleus and localizing it to the cytoplasm and tight junctions, therefore ultimately repressing YAP1-driven transcription of target genes. Acts to inhibit WWTR1/TAZ transcriptional coactivator activity via sequestering WWTR1/TAZ in the cytoplasm and at tight junctions. Regulates the size and protein composition of the podosome cortex and core at myofibril neuromuscular junctions. Selectively promotes FGF-induced MAPK activation through SRC. May play a role in the polarity, proliferation and migration of endothelial cells. This chain is Angiomotin-like protein 2, found in Canis lupus familiaris (Dog).